An 85-amino-acid chain; its full sequence is Large ribosomal subunit protein bL27 (85 aa).

The tract at residues 1–21 is disordered; that stretch reads MAHKKAAGSTKNGRDSNAKRL.

It belongs to the bacterial ribosomal protein bL27 family.

This Hydrogenovibrio crunogenus (strain DSM 25203 / XCL-2) (Thiomicrospira crunogena) protein is Large ribosomal subunit protein bL27.